The primary structure comprises 310 residues: Olfactory receptor 4C16 (310 aa).

Residues 1–23 (MQLNNNVTEFILLGLTQDPFWKK) lie on the Extracellular side of the membrane. Residue N6 is glycosylated (N-linked (GlcNAc...) asparagine). The chain crosses the membrane as a helical span at residues 24–47 (IVFVIFLRLYLGTLLGNLLIIISV). The Cytoplasmic portion of the chain corresponds to 48-55 (KTSQALKN). The chain crosses the membrane as a helical span at residues 56 to 77 (PMFFFLFYLSLSDTCLSTSITP). The Extracellular portion of the chain corresponds to 78 to 98 (RMIVDALLKKTTISFSECMIQ). The cysteines at positions 95 and 187 are disulfide-linked. A helical membrane pass occupies residues 99–118 (VFSSHVFGCLEIFILILTAV). The Cytoplasmic segment spans residues 119–137 (DRYVDICKPLHYMTIISQW). A helical transmembrane segment spans residues 138-156 (VCGVLMAVAWVGSCVHSLV). At 157–193 (QIFLALSLPFCGPNVINHCFCDLQPLLKQACSETYVV) the chain is on the extracellular side. Residues 194 to 217 (NLLLVSNSGAICAVSYVMLIFSYV) form a helical membrane-spanning segment. The Cytoplasmic segment spans residues 218–233 (IFLHSLRNHSAEVIKK). A helical membrane pass occupies residues 234 to 256 (ALSTCVSHIIVVILFFGPCIFMY). At 257-267 (TCLATVFPMDK) the chain is on the extracellular side. A helical transmembrane segment spans residues 268-287 (MIAVFYTVGTSFLNPVIYTL). The Cytoplasmic segment spans residues 288–310 (KNTEVKSAMRKLWSKKLITDDKR).

Belongs to the G-protein coupled receptor 1 family.

The protein resides in the cell membrane. Odorant receptor. This Homo sapiens (Human) protein is Olfactory receptor 4C16 (OR4C16).